We begin with the raw amino-acid sequence, 145 residues long: Toxin coregulated pilus biosynthesis protein H (145 aa).

Involved in TCP pilus biogenesis. The sequence is that of Toxin coregulated pilus biosynthesis protein H (tcpH) from Vibrio cholerae serotype O1 (strain ATCC 39315 / El Tor Inaba N16961).